Here is a 288-residue protein sequence, read N- to C-terminus: Transmembrane and coiled-coil domain-containing protein 5A (288 aa).

A coiled-coil region spans residues 13 to 105; that stretch reads IISLNMDLER…VHSISELQRK (93 aa). A helical transmembrane segment spans residues 227–249; that stretch reads SLLFSTLFFIRLLGYLIFHLSFI.

In terms of tissue distribution, testis-specific. Expressed in spermatogenic cells of testis but disappear by the time mature spermatozoa are formed (at protein level).

It is found in the endoplasmic reticulum membrane. The protein localises to the nucleus membrane. The polypeptide is Transmembrane and coiled-coil domain-containing protein 5A (Tmco5a) (Rattus norvegicus (Rat)).